Reading from the N-terminus, the 428-residue chain is Dihydroorotase (428 aa).

Residues His-59 and His-61 each coordinate Zn(2+). Residues 61-63 (HLR) and Asn-93 contribute to the substrate site. 3 residues coordinate Zn(2+): Asp-151, His-178, and His-231. Asn-277 is a substrate binding site. Residue Asp-304 coordinates Zn(2+). The active site involves Asp-304. Substrate is bound by residues His-308 and 322–323 (FG).

This sequence belongs to the metallo-dependent hydrolases superfamily. DHOase family. Class I DHOase subfamily. Zn(2+) serves as cofactor.

It catalyses the reaction (S)-dihydroorotate + H2O = N-carbamoyl-L-aspartate + H(+). It functions in the pathway pyrimidine metabolism; UMP biosynthesis via de novo pathway; (S)-dihydroorotate from bicarbonate: step 3/3. Functionally, catalyzes the reversible cyclization of carbamoyl aspartate to dihydroorotate. The sequence is that of Dihydroorotase from Bacillus cereus (strain ATCC 14579 / DSM 31 / CCUG 7414 / JCM 2152 / NBRC 15305 / NCIMB 9373 / NCTC 2599 / NRRL B-3711).